A 257-amino-acid polypeptide reads, in one-letter code: Synaptosomal-associated protein 29 (257 aa).

The interval 1-42 (MSGYPKSYNPFDDDVEDEDTRPAPWKDARDLPDGPDPPIDRQ) is disordered. Basic and acidic residues predominate over residues 20 to 32 (TRPAPWKDARDLP). Phosphoserine occurs at positions 77, 78, 114, 163, 181, 203, and 209. A t-SNARE coiled-coil homology domain is found at 195–257 (RAYHQKIDSN…KSTEKKVRQL (63 aa)).

The protein belongs to the SNAP-25 family. Forms a SNARE complex, composed of VAMP8, SNAP29 and STX17, involved in fusion of autophagosome with lysosome. Interacts with multiple syntaxins including STX6. Interacts with EIPR1. Interacts with STX17; this interaction is increased in the absence of TMEM39A. Widely expressed.

Its subcellular location is the cytoplasm. The protein resides in the golgi apparatus membrane. It is found in the cytoplasmic vesicle. It localises to the autophagosome membrane. The protein localises to the cell projection. Its subcellular location is the cilium membrane. SNAREs, soluble N-ethylmaleimide-sensitive factor-attachment protein receptors, are essential proteins for fusion of cellular membranes. SNAREs localized on opposing membranes assemble to form a trans-SNARE complex, an extended, parallel four alpha-helical bundle that drives membrane fusion. SNAP29 is a SNARE involved in autophagy through the direct control of autophagosome membrane fusion with the lysososome membrane. Also plays a role in ciliogenesis by regulating membrane fusions. The protein is Synaptosomal-associated protein 29 of Rattus norvegicus (Rat).